The sequence spans 85 residues: MSSALYKQSTNFTHSTGSFLQSAPVELTTVSGYQEFLKKQEKKNYEIQTVLSEDKSHGYVLKDGEVIANIIGEAKDYLLDLAGQA.

S22 carries the post-translational modification Phosphoserine.

The protein resides in the cytoplasm. It localises to the nucleus. This is an uncharacterized protein from Saccharomyces cerevisiae (strain ATCC 204508 / S288c) (Baker's yeast).